The primary structure comprises 332 residues: Glycerol-3-phosphate dehydrogenase [NAD(P)+] (332 aa).

NADPH-binding residues include S11, F12, K32, and K106. Sn-glycerol 3-phosphate contacts are provided by K106, G137, and S139. A141 lines the NADPH pocket. Residues K192, D245, S255, R256, and N257 each contribute to the sn-glycerol 3-phosphate site. Residue K192 is the Proton acceptor of the active site. R256 provides a ligand contact to NADPH. Positions 280 and 282 each coordinate NADPH.

Belongs to the NAD-dependent glycerol-3-phosphate dehydrogenase family.

It localises to the cytoplasm. The enzyme catalyses sn-glycerol 3-phosphate + NAD(+) = dihydroxyacetone phosphate + NADH + H(+). It catalyses the reaction sn-glycerol 3-phosphate + NADP(+) = dihydroxyacetone phosphate + NADPH + H(+). The protein operates within membrane lipid metabolism; glycerophospholipid metabolism. Functionally, catalyzes the reduction of the glycolytic intermediate dihydroxyacetone phosphate (DHAP) to sn-glycerol 3-phosphate (G3P), the key precursor for phospholipid synthesis. The polypeptide is Glycerol-3-phosphate dehydrogenase [NAD(P)+] (Staphylococcus saprophyticus subsp. saprophyticus (strain ATCC 15305 / DSM 20229 / NCIMB 8711 / NCTC 7292 / S-41)).